A 192-amino-acid chain; its full sequence is Adenylate kinase (192 aa).

10–15 is a binding site for ATP; that stretch reads GAGKGT. Positions 30–59 are NMP; it reads STGDMLREVIAKETEVGKKAKAIISSGALV. AMP contacts are provided by residues Thr-31, Arg-36, 57–59, 85–88, and Gln-92; these read ALV and GYPR. The tract at residues 126-142 is LID; the sequence is RRVQETVAAGGQVRLDD. Residue Arg-127 coordinates ATP. The AMP site is built by Arg-139 and Arg-150. Ile-178 lines the ATP pocket.

This sequence belongs to the adenylate kinase family. In terms of assembly, monomer.

Its subcellular location is the cytoplasm. It carries out the reaction AMP + ATP = 2 ADP. The protein operates within purine metabolism; AMP biosynthesis via salvage pathway; AMP from ADP: step 1/1. Catalyzes the reversible transfer of the terminal phosphate group between ATP and AMP. Plays an important role in cellular energy homeostasis and in adenine nucleotide metabolism. This is Adenylate kinase from Bartonella tribocorum (strain CIP 105476 / IBS 506).